The primary structure comprises 1338 residues: Serine/threonine-protein kinase cek1 (1338 aa).

In terms of domain architecture, PAS spans 28–98 (SKDENLQPSI…RAVNCLLKDD (71 aa)). The segment at 484–554 (PDFAIGSPMS…GRSSLFSRGR (71 aa)) is disordered. Over residues 491–501 (PMSQDSSNYSS) the composition is skewed to polar residues. Serine 525 carries the post-translational modification Phosphoserine. Positions 541-550 (PASNGRSSLF) are enriched in polar residues. The region spanning 589–958 (YKILKPISKG…VEEIKAHPFF (370 aa)) is the Protein kinase domain. ATP contacts are provided by residues 595 to 603 (ISKGAFGSV) and lysine 618. Aspartate 713 serves as the catalytic Proton acceptor. At serine 748 the chain carries Phosphoserine. Residues 813 to 842 (ENSAEDSPTATNTPTSQVDESNIFRSTDSP) are compositionally biased toward polar residues. Disordered stretches follow at residues 813–844 (ENSAEDSPTATNTPTSQVDESNIFRSTDSPRV), 1010–1035 (KLEEERPASSIPQHVSGNRKGRLRSN), and 1159–1185 (SSTMSASQSQSSMHTALPDVTEGTSSD). The AGC-kinase C-terminal domain maps to 959–1057 (KSVNWDTILE…RNLDFLNKAN (99 aa)). Positions 1159–1174 (SSTMSASQSQSSMHTA) are enriched in low complexity. Phosphoserine is present on serine 1211.

Belongs to the protein kinase superfamily. Ser/Thr protein kinase family.

The catalysed reaction is L-seryl-[protein] + ATP = O-phospho-L-seryl-[protein] + ADP + H(+). It carries out the reaction L-threonyl-[protein] + ATP = O-phospho-L-threonyl-[protein] + ADP + H(+). In terms of biological role, may facilitate the progression of anaphase through direct or indirect interaction with the cut8 protein. The sequence is that of Serine/threonine-protein kinase cek1 (cek1) from Schizosaccharomyces pombe (strain 972 / ATCC 24843) (Fission yeast).